We begin with the raw amino-acid sequence, 120 residues long: Large ribosomal subunit protein uL18 (120 aa).

The span at 1-20 shows a compositional bias: basic residues; it reads MKSTRKSATQRRHRRLRRHL. Residues 1 to 26 form a disordered region; that stretch reads MKSTRKSATQRRHRRLRRHLSGTSER.

The protein belongs to the universal ribosomal protein uL18 family. In terms of assembly, part of the 50S ribosomal subunit; part of the 5S rRNA/L5/L18/L25 subcomplex. Contacts the 5S and 23S rRNAs.

Its function is as follows. This is one of the proteins that bind and probably mediate the attachment of the 5S RNA into the large ribosomal subunit, where it forms part of the central protuberance. This is Large ribosomal subunit protein uL18 from Synechocystis sp. (strain ATCC 27184 / PCC 6803 / Kazusa).